The primary structure comprises 928 residues: Isoleucine--tRNA ligase (928 aa).

Positions 57–67 (PFANGNIHMGH) match the 'HIGH' region motif. Position 552 (glutamate 552) interacts with L-isoleucyl-5'-AMP. Residues 593–597 (KMSKS) carry the 'KMSKS' region motif. Lysine 596 contributes to the ATP binding site. Zn(2+) contacts are provided by cysteine 887, cysteine 890, cysteine 907, and cysteine 910.

The protein belongs to the class-I aminoacyl-tRNA synthetase family. IleS type 1 subfamily. In terms of assembly, monomer. Requires Zn(2+) as cofactor.

The protein resides in the cytoplasm. It carries out the reaction tRNA(Ile) + L-isoleucine + ATP = L-isoleucyl-tRNA(Ile) + AMP + diphosphate. Its function is as follows. Catalyzes the attachment of isoleucine to tRNA(Ile). As IleRS can inadvertently accommodate and process structurally similar amino acids such as valine, to avoid such errors it has two additional distinct tRNA(Ile)-dependent editing activities. One activity is designated as 'pretransfer' editing and involves the hydrolysis of activated Val-AMP. The other activity is designated 'posttransfer' editing and involves deacylation of mischarged Val-tRNA(Ile). This Lacticaseibacillus casei (strain BL23) (Lactobacillus casei) protein is Isoleucine--tRNA ligase.